The following is a 503-amino-acid chain: Protein-cysteine N-palmitoyltransferase HHAT-like protein (503 aa).

8 helical membrane passes run 12–31, 65–87, 100–122, 127–149, 250–272, 287–309, 426–445, and 460–482; these read LGLY…RGLL, WVMW…VLFA, WMYA…LLLL, MVLY…LASL, AGLS…ILTI, LAGL…FGVV, VRAL…NLVS, and ILTG…VQLV.

This sequence belongs to the membrane-bound acyltransferase family. HHAT subfamily. Interacts with SHH.

The protein resides in the endoplasmic reticulum membrane. Functionally, negatively regulates N-terminal palmitoylation of SHH by HHAT/SKN. The chain is Protein-cysteine N-palmitoyltransferase HHAT-like protein (Hhatl) from Mus musculus (Mouse).